The primary structure comprises 296 residues: MQIDEQPGNAIGAAVEGFDHATASDADIDALKSTIYTKKIAVLKGQDLSPQQFLALGKRLGRPEAYYEPMYQHPEVTEIFVSSNVPENGKQIGVPKTGKFWHADYQFMPDPFGITLIYPQVIPEKNRGTYFIDMGRAYDRLPEDLKKEISGTYCRHSVRKYFKIRPHDVYRPISEIIEEVERKTPAVVQPTTFTHPMTGETVLYISEGFTVGIEDQDGKPLDEELLKRLFDATGQLDESFEHDNIHLQSFEQGDLLVWDNRSLIHRARHTTTPEPTVSYRVTVHDERKLHDGIQAA.

(3R)-3-[(carboxymethyl)amino]butanoate is bound by residues tyrosine 66, tyrosine 71, and glycine 98. Tyrosine 66, tyrosine 71, and glycine 98 together coordinate (3R)-3-{[carboxy(hydroxy)methyl]amino}butanoate. Fe(2+)-binding residues include histidine 102 and aspartate 104. Positions 105 and 163 each coordinate (3R)-3-[(carboxymethyl)amino]butanoate. Residues tyrosine 105 and lysine 163 each coordinate (3R)-3-{[carboxy(hydroxy)methyl]amino}butanoate. Residue histidine 265 participates in Fe(2+) binding. Residue histidine 269 coordinates 2-oxoglutarate. Position 280 (arginine 280) interacts with (3R)-3-[(carboxymethyl)amino]butanoate. Arginine 280 lines the (3R)-3-{[carboxy(hydroxy)methyl]amino}butanoate pocket.

It belongs to the TfdA dioxygenase family. Fe(2+) serves as cofactor.

It catalyses the reaction a (3R)-3-[(carboxymethyl)amino]fatty acid + 2 2-oxoglutarate + 2 O2 = a (3R)-3-isocyanyl-fatty acid + 2 succinate + 3 CO2 + 2 H2O. The enzyme catalyses a (3R)-3-[(carboxymethyl)amino]fatty acid + 2-oxoglutarate + O2 = a (3R)-3-{[carboxy(hydroxy)methyl]amino}fatty acid + succinate + CO2. It carries out the reaction a (3R)-3-{[carboxy(hydroxy)methyl]amino}fatty acid + 2-oxoglutarate + O2 = a (3R)-3-isocyanyl-fatty acid + succinate + 2 CO2 + 2 H2O. The catalysed reaction is (3R)-3-[(carboxymethyl)amino]butanoate + 2 2-oxoglutarate + 2 O2 = (3R)-3-isocyanylbutanoate + 2 succinate + 3 CO2 + 2 H2O. It catalyses the reaction (3R)-3-[(carboxymethyl)amino]butanoate + 2-oxoglutarate + O2 = (3R)-3-{[carboxy(hydroxy)methyl]amino}butanoate + succinate + CO2. The enzyme catalyses (3R)-3-{[carboxy(hydroxy)methyl]amino}butanoate + 2-oxoglutarate + O2 = (3R)-3-isocyanylbutanoate + succinate + 2 CO2 + 2 H2O. In terms of biological role, involved in the biosynthesis of a unique class of isonitrile lipopeptides (INLPs). Catalyzes the conversion of (3R)-3-[(carboxymethyl)amino]fatty acids such as (3R)-3-[(carboxymethyl)amino]butanoate (CABA) to (3R)-3-isocyanylbutanoate (INBA) through an oxidative decarboxylation mechanism, thereby generating the isonitrile group of INLPs. This is (3R)-3-[(carboxymethyl)amino]fatty acid oxygenase/decarboxylase from Streptomyces coeruleorubidus.